The primary structure comprises 150 residues: Large ribosomal subunit protein bL9 (150 aa).

The protein belongs to the bacterial ribosomal protein bL9 family.

Binds to the 23S rRNA. The polypeptide is Large ribosomal subunit protein bL9 (Vibrio atlanticus (strain LGP32) (Vibrio splendidus (strain Mel32))).